Here is an 872-residue protein sequence, read N- to C-terminus: Telomerase component p95 (872 aa).

Disordered stretches follow at residues 55 to 75 (NQDQ…NSNK) and 471 to 492 (KNNK…ESTS). The segment covering 474–486 (KNQEETPETKDET) has biased composition (basic and acidic residues).

Telomerase consist of two subunit, p80 and p95 that form a 1:1:1 complex with the 159 nt telomerase RNA.

It localises to the nucleus. Its subcellular location is the chromosome. The protein localises to the telomere. It carries out the reaction DNA(n) + a 2'-deoxyribonucleoside 5'-triphosphate = DNA(n+1) + diphosphate. Ribonucleoprotein DNA polymerase that catalyzes the de novo synthesis of telomeric simple sequence repeats. Subunit p95 contains some or all of the template-independent primer DNA-binding site termed the anchor site. This is Telomerase component p95 from Tetrahymena thermophila.